The chain runs to 245 residues: 8-amino-3,8-dideoxy-manno-octulosonate cytidylyltransferase (245 aa).

Belongs to the KdsB family.

It is found in the cytoplasm. It carries out the reaction 8-amino-3,8-dideoxy-alpha-D-manno-octulosonate + CTP = CMP-8-amino-3,8-dideoxy-alpha-D-manno-oct-2-ulosonate + diphosphate. Its pathway is bacterial outer membrane biogenesis; lipopolysaccharide biosynthesis. Functionally, activates KDO8N (a required 8-carbon sugar) for incorporation into bacterial lipopolysaccharide in the Shewanella genus. The protein is 8-amino-3,8-dideoxy-manno-octulosonate cytidylyltransferase of Shewanella oneidensis (strain ATCC 700550 / JCM 31522 / CIP 106686 / LMG 19005 / NCIMB 14063 / MR-1).